Consider the following 808-residue polypeptide: uncharacterized protein (808 aa).

35-42 serves as a coordination point for ATP; the sequence is GPNNVGKT.

This is an uncharacterized protein from Methanocaldococcus jannaschii (strain ATCC 43067 / DSM 2661 / JAL-1 / JCM 10045 / NBRC 100440) (Methanococcus jannaschii).